The sequence spans 598 residues: DNA polymerase alpha subunit B (598 aa).

The segment covering 112 to 140 has biased composition (polar residues); it reads SYTTPSKGSQKRAISTPETPLTKRSVSTR. The disordered stretch occupies residues 112-167; it reads SYTTPSKGSQKRAISTPETPLTKRSVSTRSPHQLLSPSSFSPSATPSQKYNSRSNR. Residue S126 is modified to Phosphoserine. Residues T127 and T130 each carry the phosphothreonine modification. Residues S141, S147, S152, and S154 each carry the phosphoserine modification. The span at 141-158 shows a compositional bias: low complexity; it reads SPHQLLSPSSFSPSATPS.

The protein belongs to the DNA polymerase alpha subunit B family. In terms of assembly, component of the alpha DNA polymerase complex (also known as the alpha DNA polymerase-primase complex) consisting of four subunits: the catalytic subunit POLA1, the regulatory subunit POLA2, and primase complex subunits PRIM1 and PRIM2 respectively. Within the complex, POLA1 directly interacts with PRIM2/p58. Post-translationally, phosphorylated in a cell cycle-dependent manner, in G2/M phase.

The protein localises to the nucleus. Its function is as follows. Accessory subunit of the DNA polymerase alpha complex (also known as the alpha DNA polymerase-primase complex) which plays an essential role in the initiation of DNA synthesis. During the S phase of the cell cycle, the DNA polymerase alpha complex (composed of a catalytic subunit POLA1, an accessory subunit POLA2 and two primase subunits, the catalytic subunit PRIM1 and the regulatory subunit PRIM2) is recruited to DNA at the replicative forks via direct interactions with MCM10 and WDHD1. The primase subunit of the polymerase alpha complex initiates DNA synthesis by oligomerising short RNA primers on both leading and lagging strands. These primers are initially extended by the polymerase alpha catalytic subunit and subsequently transferred to polymerase delta and polymerase epsilon for processive synthesis on the lagging and leading strand, respectively. The chain is DNA polymerase alpha subunit B (POLA2) from Homo sapiens (Human).